The following is a 496-amino-acid chain: Sugar transporter ERD6 (496 aa).

6 helical membrane passes run Val-58–Phe-78, Val-94–Phe-114, Met-128–Ala-148, Leu-156–Ile-176, Gly-183–Ile-203, and Leu-211–Pro-231. A Phosphoserine modification is found at Ser-256. The next 6 helical transmembrane spans lie at Tyr-292–Val-312, Ile-329–Val-349, Ala-364–Leu-384, Ile-394–Ile-414, Leu-430–Leu-450, and Gly-456–Val-476.

It belongs to the major facilitator superfamily. Sugar transporter (TC 2.A.1.1) family. In terms of tissue distribution, expressed in both shoots and roots. In roots, expressed in epidermal cells and especially strongly in cortex cells. In flowers, expressed in sepals.

The protein resides in the membrane. Functionally, sugar transporter. The protein is Sugar transporter ERD6 (ERD6) of Arabidopsis thaliana (Mouse-ear cress).